The sequence spans 556 residues: 2-isopropylmalate synthase (556 aa).

Residues 33–307 (PIWCSSDLRD…NPGLDFSDID (275 aa)) form the Pyruvate carboxyltransferase domain. The Mg(2+) site is built by Asp42, His246, His248, and Asn282. Positions 439 to 556 (ANVPYALISH…SLSQTQAKAA (118 aa)) are regulatory domain.

The protein belongs to the alpha-IPM synthase/homocitrate synthase family. LeuA type 2 subfamily. Homodimer. Mg(2+) serves as cofactor.

Its subcellular location is the cytoplasm. It carries out the reaction 3-methyl-2-oxobutanoate + acetyl-CoA + H2O = (2S)-2-isopropylmalate + CoA + H(+). It functions in the pathway amino-acid biosynthesis; L-leucine biosynthesis; L-leucine from 3-methyl-2-oxobutanoate: step 1/4. Its function is as follows. Catalyzes the condensation of the acetyl group of acetyl-CoA with 3-methyl-2-oxobutanoate (2-ketoisovalerate) to form 3-carboxy-3-hydroxy-4-methylpentanoate (2-isopropylmalate). The sequence is that of 2-isopropylmalate synthase from Pseudomonas syringae pv. syringae (strain B728a).